Here is a 396-residue protein sequence, read N- to C-terminus: Putative peptide chain release factor 1, mitochondrial (396 aa).

An N5-methylglutamine modification is found at glutamine 270.

This sequence belongs to the prokaryotic/mitochondrial release factor family. Post-translationally, methylation of glutamine in the GGQ triplet is conserved from bacteria to mammals.

Its subcellular location is the mitochondrion. This chain is Putative peptide chain release factor 1, mitochondrial, found in Schizosaccharomyces pombe (strain 972 / ATCC 24843) (Fission yeast).